The following is a 115-amino-acid chain: Regulator of ribonuclease activity B (115 aa).

It belongs to the RraB family. As to quaternary structure, interacts with the C-terminal region of Rne.

The protein resides in the cytoplasm. In terms of biological role, globally modulates RNA abundance by binding to RNase E (Rne) and regulating its endonucleolytic activity. Can modulate Rne action in a substrate-dependent manner by altering the composition of the degradosome. In Aeromonas salmonicida (strain A449), this protein is Regulator of ribonuclease activity B.